An 801-amino-acid chain; its full sequence is Phenylalanine--tRNA ligase beta subunit (801 aa).

Positions 39 to 152 (ARAFSGVVVG…TDAPIGTDIR (114 aa)) constitute a tRNA-binding domain. The B5 domain occupies 407 to 482 (PARAPITLPI…RIYGYDNIPS (76 aa)). The Mg(2+) site is built by D460, D466, E469, and E470. One can recognise an FDX-ACB domain in the interval 706–799 (SKFPQVRRDI…LTVEHSAQLR (94 aa)).

Belongs to the phenylalanyl-tRNA synthetase beta subunit family. Type 1 subfamily. In terms of assembly, tetramer of two alpha and two beta subunits. It depends on Mg(2+) as a cofactor.

The protein localises to the cytoplasm. It catalyses the reaction tRNA(Phe) + L-phenylalanine + ATP = L-phenylalanyl-tRNA(Phe) + AMP + diphosphate + H(+). The polypeptide is Phenylalanine--tRNA ligase beta subunit (Psychrobacter arcticus (strain DSM 17307 / VKM B-2377 / 273-4)).